Here is a 159-residue protein sequence, read N- to C-terminus: U1 small nuclear ribonucleoprotein C (159 aa).

The Matrin-type zinc-finger motif lies at 4-36; that stretch reads FYCDYCDTYLTHDSPSVRKTHCSGRKHKENVKD. A disordered region spans residues 61 to 99; it reads KIPPTPFPGAPPPGGSLLPHPSIGGPPRPGMLPAPPMGG. 2 stretches are compositionally biased toward pro residues: residues 63 to 74 and 84 to 99; these read PPTPFPGAPPPG and GGPP…PMGG.

The protein belongs to the U1 small nuclear ribonucleoprotein C family. As to quaternary structure, component of the U1 snRNP. The U1 snRNP is composed of the U1 snRNA and the 7 core Sm proteins snrpb, snrpd1, snrpd2, snrpd3, snrpe, snrpf and snrpg that assemble in a heptameric protein ring on the Sm site of the small nuclear RNA to form the core snRNP, and at least 3 U1 snRNP-specific proteins snrnp70/U1-70K, snrpa/U1-A and snrpc/U1-C. snrpc/U1-C interacts with U1 snRNA and the 5' splice-site region of the pre-mRNA.

The protein localises to the nucleus. Functionally, component of the spliceosomal U1 snRNP, which is essential for recognition of the pre-mRNA 5' splice-site and the subsequent assembly of the spliceosome. snrpc/U1-C is directly involved in initial 5' splice-site recognition for both constitutive and regulated alternative splicing. The interaction with the 5' splice-site seems to precede base-pairing between the pre-mRNA and the U1 snRNA. Stimulates commitment or early (E) complex formation by stabilizing the base pairing of the 5' end of the U1 snRNA and the 5' splice-site region. This is U1 small nuclear ribonucleoprotein C from Danio rerio (Zebrafish).